We begin with the raw amino-acid sequence, 880 residues long: Valine--tRNA ligase (880 aa).

The 'HIGH' region signature appears at 47 to 57 (PNITGKLHLGH). Positions 526–530 (KMSKS) match the 'KMSKS' region motif. Lysine 529 serves as a coordination point for ATP. Residues 810 to 845 (LLDLVDREKELERLNKEKTKLEGEILRVEKKLSNER) adopt a coiled-coil conformation.

This sequence belongs to the class-I aminoacyl-tRNA synthetase family. ValS type 1 subfamily. As to quaternary structure, monomer.

It is found in the cytoplasm. It carries out the reaction tRNA(Val) + L-valine + ATP = L-valyl-tRNA(Val) + AMP + diphosphate. Functionally, catalyzes the attachment of valine to tRNA(Val). As ValRS can inadvertently accommodate and process structurally similar amino acids such as threonine, to avoid such errors, it has a 'posttransfer' editing activity that hydrolyzes mischarged Thr-tRNA(Val) in a tRNA-dependent manner. The protein is Valine--tRNA ligase of Clostridium perfringens (strain 13 / Type A).